The following is a 150-amino-acid chain: Transcriptional repressor NrdR (150 aa).

A zinc finger lies at 3 to 34; that stretch reads CPFCAHPDSKVVDSRPDKGGAAIRRRRECESC. The ATP-cone domain maps to 49–139; sequence PLVLKKDGRR…VYRSFKDVNE (91 aa).

Belongs to the NrdR family. The cofactor is Zn(2+).

Its function is as follows. Negatively regulates transcription of bacterial ribonucleotide reductase nrd genes and operons by binding to NrdR-boxes. In Geobacter metallireducens (strain ATCC 53774 / DSM 7210 / GS-15), this protein is Transcriptional repressor NrdR.